Reading from the N-terminus, the 432-residue chain is Transcriptional adapter 3 (432 aa).

Lys21 is covalently cross-linked (Glycyl lysine isopeptide (Lys-Gly) (interchain with G-Cter in SUMO2)). A coiled-coil region spans residues 40 to 69 (IEELDTLQLELETLLSSASRRLRVLEAETQ). The segment at 87–127 (GRDHELGAPPKHGKPKKQKLEGKTGHGPGPGPGRPKSKNVQ) is disordered. Lys129 participates in a covalent cross-link: Glycyl lysine isopeptide (Lys-Gly) (interchain with G-Cter in SUMO2). The tract at residues 272 to 319 (NIISPMEDSPIPDMSGKESGADGASTSPRNQNKPFSVPHTKSLESRIK) is disordered. Phosphoserine is present on residues Ser280 and Ser298. A compositionally biased stretch (polar residues) spans 295-305 (ASTSPRNQNKP). Positions 367-407 (LLRLAKEEVSRQELRQRVRMADNEVMDAFRKIMAARQKKRT) form a coiled coil. Lys418 carries the N6-acetyllysine modification.

Belongs to the NGG1 family. As to quaternary structure, the PCAF complex is composed of a number of TBP-associated factors (TAFS), such as TAF5, TAF5L, TAF6, TAF6L, TAF9, TAF10 and TAF12, PCAF, and also PCAF-associated factors (PAFs), such as TADA2L/ADA2, TADA3L/ADA3 and SPT3. Interacts directly with TADA2L and PCAF and also with the high-risk HPV oncoprotein E6. Component of the STAGA transcription coactivator-HAT complex, at least composed of SUPT3H, GCN5L2, TAF5L, TAF6L, SUPT7L, TADA3L, TAD1L, TAF10, TAF12, TRRAP and TAF9. Component of the TFTC-HAT complex. Component of the ADA2A-containing complex (ATAC), composed of KAT14, KAT2A, TADA2L, TADA3L, ZZ3, MBIP, WDR5, YEATS2, CCDC101 and DR1.

It localises to the nucleus. Functionally, functions as a component of the PCAF complex. The PCAF complex is capable of efficiently acetylating histones in a nucleosomal context. The PCAF complex could be considered as the human version of the yeast SAGA complex. Also known as a coactivator for p53/TP53-dependent transcriptional activation. Component of the ATAC complex, a complex with histone acetyltransferase activity on histones H3 and H4. The sequence is that of Transcriptional adapter 3 (Tada3) from Mus musculus (Mouse).